The chain runs to 306 residues: Methionyl-tRNA formyltransferase (306 aa).

108–111 (SLLP) lines the (6S)-5,6,7,8-tetrahydrofolate pocket.

Belongs to the Fmt family.

It carries out the reaction L-methionyl-tRNA(fMet) + (6R)-10-formyltetrahydrofolate = N-formyl-L-methionyl-tRNA(fMet) + (6S)-5,6,7,8-tetrahydrofolate + H(+). In terms of biological role, attaches a formyl group to the free amino group of methionyl-tRNA(fMet). The formyl group appears to play a dual role in the initiator identity of N-formylmethionyl-tRNA by promoting its recognition by IF2 and preventing the misappropriation of this tRNA by the elongation apparatus. This Pseudarthrobacter chlorophenolicus (strain ATCC 700700 / DSM 12829 / CIP 107037 / JCM 12360 / KCTC 9906 / NCIMB 13794 / A6) (Arthrobacter chlorophenolicus) protein is Methionyl-tRNA formyltransferase.